The sequence spans 333 residues: Beta-ketoacyl-[acyl-carrier-protein] synthase III (333 aa).

Active-site residues include Cys117 and His257. The interval 258 to 262 is ACP-binding; sequence QANLR. Asn287 is a catalytic residue.

It belongs to the thiolase-like superfamily. FabH family. Homodimer.

The protein localises to the cytoplasm. It catalyses the reaction malonyl-[ACP] + acetyl-CoA + H(+) = 3-oxobutanoyl-[ACP] + CO2 + CoA. It participates in lipid metabolism; fatty acid biosynthesis. Its function is as follows. Catalyzes the condensation reaction of fatty acid synthesis by the addition to an acyl acceptor of two carbons from malonyl-ACP. Catalyzes the first condensation reaction which initiates fatty acid synthesis and may therefore play a role in governing the total rate of fatty acid production. Possesses both acetoacetyl-ACP synthase and acetyl transacylase activities. Its substrate specificity determines the biosynthesis of branched-chain and/or straight-chain of fatty acids. This Azobacteroides pseudotrichonymphae genomovar. CFP2 protein is Beta-ketoacyl-[acyl-carrier-protein] synthase III.